The primary structure comprises 423 residues: uncharacterized protein (423 aa).

This sequence belongs to the mycobacterial PPE family.

Its function is as follows. Could be required for host endothelial-cell invasion and/or intracellular survival. This is an uncharacterized protein from Mycobacterium tuberculosis (strain CDC 1551 / Oshkosh).